An 81-amino-acid chain; its full sequence is Cytochrome c oxidase subunit NDUFA4 (81 aa).

Residues 1 to 14 (MLRHILGLAKKHPS) lie on the Mitochondrial matrix side of the membrane. Lys-10 bears the N6-acetyllysine mark. Residues 15 to 37 (LIPLFVFLGTGATGATLYLLRLA) traverse the membrane as a helical segment. The Mitochondrial intermembrane portion of the chain corresponds to 38-81 (LFSPDVCWDRNNPEPWNKLGPNDQYKFYSVNVDYDKLKKERPDF). The residue at position 66 (Ser-66) is a Phosphoserine.

The protein belongs to the complex IV NDUFA4 subunit family. In terms of assembly, component of the cytochrome c oxidase (complex IV, CIV), a multisubunit enzyme composed of 14 subunits. The complex is composed of a catalytic core of 3 subunits MT-CO1, MT-CO2 and MT-CO3, encoded in the mitochondrial DNA, and 11 supernumerary subunits COX4I, COX5A, COX5B, COX6A, COX6B, COX6C, COX7A, COX7B, COX7C, COX8 and NDUFA4, which are encoded in the nuclear genome. The complex exists as a monomer or a dimer and forms supercomplexes (SCs) in the inner mitochondrial membrane with NADH-ubiquinone oxidoreductase (complex I, CI) and ubiquinol-cytochrome c oxidoreductase (cytochrome b-c1 complex, complex III, CIII), resulting in different assemblies (supercomplex SCI(1)III(2)IV(1) and megacomplex MCI(2)III(2)IV(2)). Interacts with RAB5IF. Interacts with FLVCR2; this interaction occurs in the absence of heme and is disrupted upon heme binding.

The protein localises to the mitochondrion inner membrane. Functionally, component of the cytochrome c oxidase, the last enzyme in the mitochondrial electron transport chain which drives oxidative phosphorylation. The respiratory chain contains 3 multisubunit complexes succinate dehydrogenase (complex II, CII), ubiquinol-cytochrome c oxidoreductase (cytochrome b-c1 complex, complex III, CIII) and cytochrome c oxidase (complex IV, CIV), that cooperate to transfer electrons derived from NADH and succinate to molecular oxygen, creating an electrochemical gradient over the inner membrane that drives transmembrane transport and the ATP synthase. Cytochrome c oxidase is the component of the respiratory chain that catalyzes the reduction of oxygen to water. Electrons originating from reduced cytochrome c in the intermembrane space (IMS) are transferred via the dinuclear copper A center (CU(A)) of subunit 2 and heme A of subunit 1 to the active site in subunit 1, a binuclear center (BNC) formed by heme A3 and copper B (CU(B)). The BNC reduces molecular oxygen to 2 water molecules unsing 4 electrons from cytochrome c in the IMS and 4 protons from the mitochondrial matrix. NDUFA4 is required for complex IV maintenance. The chain is Cytochrome c oxidase subunit NDUFA4 (NDUFA4) from Macaca fascicularis (Crab-eating macaque).